A 1216-amino-acid polypeptide reads, in one-letter code: Metabotropic glycine receptor (1216 aa).

Positions 1-23 (MGVMAYPFLFCLLLVHFGLGAIG) are cleaved as a signal peptide. Topologically, residues 24 to 417 (ASREAPSRPD…CFVQEDKYLR (394 aa)) are extracellular. A disordered region spans residues 25–65 (SREAPSRPDPPRERTLRAKQHAQQPARASASDPSAPWSRST). Basic and acidic residues predominate over residues 28–40 (APSRPDPPRERTL). Positions 46-64 (AQQPARASASDPSAPWSRS) are enriched in low complexity. Residues 85-281 (YLYTGDSHKL…CENGSYKPGW (197 aa)) form a cache-like region region. N-linked (GlcNAc...) asparagine glycans are attached at residues Asn-98 and Asn-143. A disulfide bond links Cys-99 and Cys-272. Residues Ser-172 and Arg-173 each coordinate glycine. N-linked (GlcNAc...) asparagine glycosylation occurs at Asn-215. Position 271 (Glu-271) interacts with glycine. N-linked (GlcNAc...) asparagine glycosylation occurs at Asn-274. Asp-307 is a binding site for glycine. An N-linked (GlcNAc...) asparagine glycan is attached at Asn-333. A helical membrane pass occupies residues 418 to 439 (LAIISFQALCMLLDFLSMLVVY). The Cytoplasmic segment spans residues 440–451 (RFRKAKSIRASG). Residues 452-474 (LILLETILFGSLLLYFPVVILYF) form a helical membrane-spanning segment. The Extracellular portion of the chain corresponds to 475-478 (EPST). A helical membrane pass occupies residues 479-501 (FRCILLRWVRLLGFATVYGTVTL). Residues Cys-481 and Cys-573 are joined by a disulfide bond. At 502 to 525 (KLHRVLKVFLSRTAQRIPYMTGGR) the chain is on the cytoplasmic side. Residues 526 to 547 (VMRMLAVILLVVFWFLVGWTSS) traverse the membrane as a helical segment. The Extracellular portion of the chain corresponds to 548-576 (VCQNLERHISLIGQGRTSDHLIFSMCLVE). The chain crosses the membrane as a helical span at residues 577–597 (RWDYMTAAAEFLFLLWGVYLC). Topologically, residues 598 to 611 (YAVRTVPSAFHEPR) are cytoplasmic. Residues 612 to 633 (YMAVAVHNELIISAIFHTIRFV) form a helical membrane-spanning segment. The Extracellular segment spans residues 634 to 642 (LASRLQSDW). Residues 643–664 (MLMLYFAHTHLTVTVTIGLLLI) form a helical membrane-spanning segment. The Cytoplasmic segment spans residues 665-1216 (PKFSHSSNNP…NEEVRLARKV (552 aa)). 3 positions are modified to phosphoserine: Ser-694, Ser-705, and Ser-708. 2 disordered regions span residues 757 to 875 (RITE…ESVP) and 911 to 1000 (KEKT…HMKD). Over residues 769–781 (CSKEDKDGGEHGS) the composition is skewed to basic and acidic residues. Lys-774 is covalently cross-linked (Glycyl lysine isopeptide (Lys-Gly) (interchain with G-Cter in ubiquitin)). The segment covering 864–873 (EDSQAVSTES) has biased composition (polar residues). Ser-866 is modified (phosphoserine). The segment covering 926 to 944 (VEERAKAQKALPRERETNR) has biased composition (basic and acidic residues). Composition is skewed to polar residues over residues 945–963 (KYSN…PNSS) and 980–991 (QRANPTTANSDL). Position 947 is a phosphoserine (Ser-947). The VCPWE motif 1 signature appears at 1007 to 1011 (VCPWE). Positions 1038–1072 (ERNPTFSLKEKSHPKPKAADLCQQSNPKSVDKAEV) are disordered. At Ser-1066 the chain carries Phosphoserine. Residues 1072–1076 (VCPWE) carry the VCPWE motif 2 motif. Phosphoserine is present on Ser-1081. The disordered stretch occupies residues 1128–1167 (SKVENENLNQLGEQEKKTSSSERNVPDSHNSSNNFQPPLM). A compositionally biased stretch (basic and acidic residues) spans 1140–1153 (EQEKKTSSSERNVP). Positions 1154-1163 (DSHNSSNNFQ) are enriched in polar residues. The VCPWE motif 3 signature appears at 1172 to 1176 (VCPWE).

It belongs to the G-protein coupled receptor 3 family. In terms of assembly, homodimer. Associates with the RGS7-GNB5 complex, promoting its localization to the cell membrane and regulating its GTPase activator activity. Interacts (via VCPWE motifs) with GNAO1. Interacts with GPC4. Interacts with EGFLAM.

The protein resides in the cell membrane. The protein localises to the postsynaptic cell membrane. It is found in the presynaptic cell membrane. It localises to the nucleus. Metabotropic receptor for glycine that controls synapse formation and function in the brain. Acts as an atypical G-protein coupled receptor that recruits and regulates the RGS7-GNB5 complex instead of activating G proteins. In absence of glycine ligand, promotes the GTPase activator activity of RGS7, increasing the GTPase activity of G protein alpha subunits, thereby driving them into their inactive GDP-bound form. Glycine-binding changes the conformation of the intracellular surface, inhibiting the GTPase activator activity of the RGS7-GNB5 complex, promoting G protein alpha subunits into their active GTP-bound form and regulating cAMP levels. Also able to bind taurine, a compound closely related to glycine, but with a two-fold lower affinity. Glycine receptor-dependent regulation of cAMP controls key ion channels, kinases and neurotrophic factors involved in neuronal excitability and synaptic transmission. Plays a pivotal role in regulating mood and cognition via its ability to regulate neuronal excitability in L2/L3 pyramidal neurons of the prefrontal cortex. Also involved in spatial learning by regulating hippocampal CA1 neuronal excitability. Acts as a synaptic organizer in the hippocampus, required for proper mossy fiber-CA3 neurocircuitry establishment, structure and function: induces presynaptic differentiation in contacting axons via its interaction with GPC4. In addition to glycine, may also act as a receptor for osteocalcin (BGLAP) hormone: osteocalcin-binding initiates a signaling response that prevents neuronal apoptosis in the hippocampus and regulates the synthesis of neurotransmitters. This Bos taurus (Bovine) protein is Metabotropic glycine receptor (GPR158).